We begin with the raw amino-acid sequence, 333 residues long: Beta-ketoacyl-[acyl-carrier-protein] synthase III (333 aa).

Residues C114 and H255 contribute to the active site. The tract at residues 256-260 is ACP-binding; the sequence is QANYR. N285 is an active-site residue.

The protein belongs to the thiolase-like superfamily. FabH family. In terms of assembly, homodimer.

Its subcellular location is the cytoplasm. It catalyses the reaction malonyl-[ACP] + acetyl-CoA + H(+) = 3-oxobutanoyl-[ACP] + CO2 + CoA. It functions in the pathway lipid metabolism; fatty acid biosynthesis. Its function is as follows. Catalyzes the condensation reaction of fatty acid synthesis by the addition to an acyl acceptor of two carbons from malonyl-ACP. Catalyzes the first condensation reaction which initiates fatty acid synthesis and may therefore play a role in governing the total rate of fatty acid production. Possesses both acetoacetyl-ACP synthase and acetyl transacylase activities. Its substrate specificity determines the biosynthesis of branched-chain and/or straight-chain of fatty acids. This Aliarcobacter butzleri (strain RM4018) (Arcobacter butzleri) protein is Beta-ketoacyl-[acyl-carrier-protein] synthase III.